The chain runs to 75 residues: uncharacterized protein (75 aa).

Its subcellular location is the plastid. The protein resides in the chloroplast. This is an uncharacterized protein from Calycanthus floridus var. glaucus (Eastern sweetshrub).